Here is a 538-residue protein sequence, read N- to C-terminus: Endoglucanase 16 (538 aa).

The first 26 residues, 1–26 (MRWRRVGDVVAVALLLGAAAAAAAAA), serve as a signal peptide directing secretion. The Nucleophile role is filled by Asp-83. Active-site residues include His-431, Asp-483, and Glu-492. The interval 513 to 538 (RQESPSTTTTTTATTSSPEMGLSVNR) is disordered. Low complexity predominate over residues 516-530 (SPSTTTTTTATTSSP).

It belongs to the glycosyl hydrolase 9 (cellulase E) family.

Its subcellular location is the secreted. The enzyme catalyses Endohydrolysis of (1-&gt;4)-beta-D-glucosidic linkages in cellulose, lichenin and cereal beta-D-glucans.. This is Endoglucanase 16 from Oryza sativa subsp. japonica (Rice).